The sequence spans 71 residues: MDIVKSIDTSVDAVLDEFDCAYFAVTLKVEFKTGKQLVCIGFGDTLLEAKDKAYAKLGLSIIEEVNSHTVV.

The protein is Non-structural protein 3a of Canis lupus familiaris (Dog).